The chain runs to 38 residues: MKVQASVKVLCRSCKIIKRNNVVRVICSNDPKHKQRQG.

This sequence belongs to the bacterial ribosomal protein bL36 family.

The chain is Large ribosomal subunit protein bL36 from Buchnera aphidicola subsp. Acyrthosiphon pisum (strain 5A).